We begin with the raw amino-acid sequence, 294 residues long: 33 kDa chaperonin (294 aa).

Intrachain disulfides connect cysteine 236-cysteine 238 and cysteine 269-cysteine 272.

Belongs to the HSP33 family. Post-translationally, under oxidizing conditions two disulfide bonds are formed involving the reactive cysteines. Under reducing conditions zinc is bound to the reactive cysteines and the protein is inactive.

It localises to the cytoplasm. Functionally, redox regulated molecular chaperone. Protects both thermally unfolding and oxidatively damaged proteins from irreversible aggregation. Plays an important role in the bacterial defense system toward oxidative stress. This chain is 33 kDa chaperonin, found in Desulfotalea psychrophila (strain LSv54 / DSM 12343).